The sequence spans 500 residues: FAD-linked oxidoreductase chyH (500 aa).

An N-terminal signal peptide occupies residues Met1–Ser20. In terms of domain architecture, FAD-binding PCMH-type spans Leu65–Ile235. Residues Asn199, Asn266, Asn275, and Asn383 are each glycosylated (N-linked (GlcNAc...) asparagine).

Belongs to the oxygen-dependent FAD-linked oxidoreductase family. It depends on FAD as a cofactor.

It participates in pigment biosynthesis. In terms of biological role, FAD-linked oxidoreductase; part of the gene cluster that mediates the biosynthesis of the yellow pigment chrysogine. the NRPS chyA mediates the condensation of anthranilic acid and alanine into the intermediate 2-(2-aminopropanamido)benzoic acid. The remainder of the pathway is highly branched yielding at least 13 chrysogine-related compounds. The malonyl transferase chyE converts 2-(2-aminopropanamido)benzoic acid and 2-(2-aminopropanamido)benzamidine into 2-(2-(2-carboxyacetamido)propanamido)benzoic acid and 3-((1-((2-carbamoylphenyl)amino)-1-oxopropan-2-yl)amino)-3-oxopropanoic acid, respectively. ChyD is an amidase, being responsible for the amidation of the carboxylic acid moiety of 2-(2-aminopropanamido)benzoic acid, 2-(2-(2-carboxyacetamido)propanamido)benzoic acid and 2-(2-((4-amino-1-carboxy-4-oxobutyl)amino)propanamido)benzoic acid. ChyC is involved in the same reactions as ChyD, but plays a more minor role in the amidation reactions compared to chyD. The oxidoreductases chyH and chyM are involved in oxidation reactions that form N-pyruvoylanthranilamide from 2-(2-aminopropanamido)benzamidine and (1-((2-carbamoylphenyl)amino)-1-oxopropan-2-yl)glutamine, respectively. N-pyruvoylanthranilamide is further converted via two further branches in the pathway, yielding chrysogine and additional chrysogine-related coumpounds. Chrysogine is likely formed by a spontaneous ring closure from N-pyruvoylanthranilamide. The chain is FAD-linked oxidoreductase chyH from Penicillium rubens (strain ATCC 28089 / DSM 1075 / NRRL 1951 / Wisconsin 54-1255) (Penicillium chrysogenum).